An 87-amino-acid polypeptide reads, in one-letter code: NAD(P)H-quinone oxidoreductase subunit O (87 aa).

Over residues 1–10 the composition is skewed to basic and acidic residues; that stretch reads MSEQTGKVDD. The tract at residues 1 to 26 is disordered; that stretch reads MSEQTGKVDDSQSPPKVQKKLRKGDL.

Belongs to the complex I NdhO subunit family. As to quaternary structure, NDH-1 can be composed of about 15 different subunits; different subcomplexes with different compositions have been identified which probably have different functions.

Its subcellular location is the cellular thylakoid membrane. It carries out the reaction a plastoquinone + NADH + (n+1) H(+)(in) = a plastoquinol + NAD(+) + n H(+)(out). It catalyses the reaction a plastoquinone + NADPH + (n+1) H(+)(in) = a plastoquinol + NADP(+) + n H(+)(out). In terms of biological role, NDH-1 shuttles electrons from an unknown electron donor, via FMN and iron-sulfur (Fe-S) centers, to quinones in the respiratory and/or the photosynthetic chain. The immediate electron acceptor for the enzyme in this species is believed to be plastoquinone. Couples the redox reaction to proton translocation, and thus conserves the redox energy in a proton gradient. Cyanobacterial NDH-1 also plays a role in inorganic carbon-concentration. The protein is NAD(P)H-quinone oxidoreductase subunit O of Prochlorococcus marinus (strain NATL1A).